A 78-amino-acid polypeptide reads, in one-letter code: RNA-binding protein Hfq (78 aa).

In terms of domain architecture, Sm spans 9–69 (DHFLNQLRKE…ISTFAPQRNV (61 aa)).

Belongs to the Hfq family. Homohexamer.

RNA chaperone that binds small regulatory RNA (sRNAs) and mRNAs to facilitate mRNA translational regulation in response to envelope stress, environmental stress and changes in metabolite concentrations. Also binds with high specificity to tRNAs. The chain is RNA-binding protein Hfq from Halalkalibacterium halodurans (strain ATCC BAA-125 / DSM 18197 / FERM 7344 / JCM 9153 / C-125) (Bacillus halodurans).